Reading from the N-terminus, the 177-residue chain is Interleukin-1 receptor antagonist protein (177 aa).

The N-terminal stretch at 1-25 (MEVCRCHHGYLISLLLFLFHSETAC) is a signal peptide. Cysteines 91 and 141 form a disulfide. 2 N-linked (GlcNAc...) asparagine glycosylation sites follow: asparagine 109 and asparagine 114.

The protein belongs to the IL-1 family.

It localises to the secreted. Functionally, anti-inflammatory antagonist of interleukin-1 family of proinflammatory cytokines such as interleukin-1beta/IL1B and interleukin-1alpha/IL1A. Protects from immune dysregulation and uncontrolled systemic inflammation triggered by IL1 for a range of innate stimulatory agents such as pathogens. In Tursiops truncatus (Atlantic bottle-nosed dolphin), this protein is Interleukin-1 receptor antagonist protein (IL1RN).